A 147-amino-acid chain; its full sequence is MNASATQATEIWPLVAYFFLVVMLVVGVMALSYIIGERHRSKATDEPFESGIVTVGLARFRLSAKFYLIAVFFVIFDVEAVFLFAWAVAFRELGWPGYIEAIIFISILGAALAYLWRLGALDWGPPRHSAGRFAKDSRSPNHAVVSK.

Helical transmembrane passes span 11 to 31, 68 to 88, and 93 to 113; these read IWPLVAYFFLVVMLVVGVMAL, LIAVFFVIFDVEAVFLFAWAV, and LGWPGYIEAIIFISILGAALA.

This sequence belongs to the complex I subunit 3 family. As to quaternary structure, NDH-1 is composed of 14 different subunits. Subunits NuoA, H, J, K, L, M, N constitute the membrane sector of the complex.

The protein resides in the cell inner membrane. It carries out the reaction a quinone + NADH + 5 H(+)(in) = a quinol + NAD(+) + 4 H(+)(out). Functionally, NDH-1 shuttles electrons from NADH, via FMN and iron-sulfur (Fe-S) centers, to quinones in the respiratory chain. The immediate electron acceptor for the enzyme in this species is believed to be ubiquinone. Couples the redox reaction to proton translocation (for every two electrons transferred, four hydrogen ions are translocated across the cytoplasmic membrane), and thus conserves the redox energy in a proton gradient. This chain is NADH-quinone oxidoreductase subunit A, found in Nitrosospira multiformis (strain ATCC 25196 / NCIMB 11849 / C 71).